Here is a 57-residue protein sequence, read N- to C-terminus: Protein translocase subunit SecE (57 aa).

Residues Ala-34 to Val-54 traverse the membrane as a helical segment.

This sequence belongs to the SecE/SEC61-gamma family. In terms of assembly, component of the Sec protein translocase complex. Heterotrimer consisting of SecY (alpha), SecG (beta) and SecE (gamma) subunits. The heterotrimers can form oligomers, although 1 heterotrimer is thought to be able to translocate proteins. Interacts with the ribosome. May interact with SecDF, and other proteins may be involved.

The protein resides in the cell membrane. In terms of biological role, essential subunit of the Sec protein translocation channel SecYEG. Clamps together the 2 halves of SecY. May contact the channel plug during translocation. In Halobacterium salinarum (strain ATCC 29341 / DSM 671 / R1), this protein is Protein translocase subunit SecE.